We begin with the raw amino-acid sequence, 49 residues long: Small ribosomal subunit protein eS31 (49 aa).

Zn(2+) contacts are provided by Cys21, Cys24, Cys39, and Cys42. The segment at 21–42 adopts a C4-type zinc-finger fold; sequence CPRCGNGVFLAEHEDRMSCGRC.

Belongs to the eukaryotic ribosomal protein eS31 family. In terms of assembly, part of the 30S ribosomal subunit. Requires Zn(2+) as cofactor.

This Methanothrix thermoacetophila (strain DSM 6194 / JCM 14653 / NBRC 101360 / PT) (Methanosaeta thermophila) protein is Small ribosomal subunit protein eS31.